The sequence spans 304 residues: Negative regulator of the PHO system (304 aa).

Residues 7–297 (FKQLEKVGNG…AKDALNHPWF (291 aa)) enclose the Protein kinase domain. ATP contacts are provided by residues 13-21 (VGNGTYATV) and Lys-36. Catalysis depends on Asp-133, which acts as the Proton acceptor.

This sequence belongs to the protein kinase superfamily. CMGC Ser/Thr protein kinase family. CDC2/CDKX subfamily. In terms of assembly, interacts with a number of cyclins.

The catalysed reaction is L-seryl-[protein] + ATP = O-phospho-L-seryl-[protein] + ADP + H(+). It carries out the reaction L-threonyl-[protein] + ATP = O-phospho-L-threonyl-[protein] + ADP + H(+). When phosphate concentrations are high it phosphorylates the PHO4 transcription factor thus establishing repression. The sequence is that of Negative regulator of the PHO system (PHO85) from Kluyveromyces lactis (strain ATCC 8585 / CBS 2359 / DSM 70799 / NBRC 1267 / NRRL Y-1140 / WM37) (Yeast).